Reading from the N-terminus, the 134-residue chain is Large ribosomal subunit protein eL14 (134 aa).

This sequence belongs to the eukaryotic ribosomal protein eL14 family. Component of the large ribosomal subunit (LSU). Mature yeast ribosomes consist of a small (40S) and a large (60S) subunit. The 40S small subunit contains 1 molecule of ribosomal RNA (18S rRNA) and at least 33 different proteins. The large 60S subunit contains 3 rRNA molecules (25S, 5.8S and 5S rRNA) and at least 46 different proteins.

It localises to the cytoplasm. The protein resides in the nucleus. In terms of biological role, component of the ribosome, a large ribonucleoprotein complex responsible for the synthesis of proteins in the cell. The small ribosomal subunit (SSU) binds messenger RNAs (mRNAs) and translates the encoded message by selecting cognate aminoacyl-transfer RNA (tRNA) molecules. The large subunit (LSU) contains the ribosomal catalytic site termed the peptidyl transferase center (PTC), which catalyzes the formation of peptide bonds, thereby polymerizing the amino acids delivered by tRNAs into a polypeptide chain. The nascent polypeptides leave the ribosome through a tunnel in the LSU and interact with protein factors that function in enzymatic processing, targeting, and the membrane insertion of nascent chains at the exit of the ribosomal tunnel. This is Large ribosomal subunit protein eL14 (rpl14) from Schizosaccharomyces pombe (strain 972 / ATCC 24843) (Fission yeast).